Consider the following 587-residue polypeptide: MERLMRLTILLFLGAVLAGCASVPSTSAPQAIGTVERPVPSNLPKPSPGMDPDVLLREFLKATADPANRHLAARQFLTESASNAWDDAGSALLIDHVVFVETRSAEKVSVTMRADILGSLSDVGVFETAEGQLPDPGPIELVKTSGGWRIDRLPNGVFLDWQQFQETYKRNTLYFADPTGKTVVPDPRYVAVSDRDQLATELVSKLLAGPRPEMARTVRNLLAPPLRLRGPVTRADGGKSGIGRGYGGARVDMEKLSTTDPHSRQLLAAQIIWTLARADIRGPYVINADGAPLEDRFAEGWTTSDVAATDPGVADGAAAGLHALVNGSLVAMDAQRVTPVPGAFGRMPEQTAAAVSRSGRQVASVVTLGRGAPDEAASLWVGDLGGEAVQSADGHSLLRPSWSLDDAVWVVVDTNVVLRAIQDPASGQPARIPVDSTAVASRFPGAINDLQLSRDGTRAAMVIGGQVILAGVEQTQAGQFALTYPRRLGFGLGSSVVSLSWRTGDDIVVTRTDAAHPVSYVNLDGVNSDAPSRGLQTPLTAIAANPSTVYVAGPQGVLMYSASVESRPGWADVPGLMVPGAAPVLPG.

Residues 1 to 19 (MERLMRLTILLFLGAVLAG) form the signal peptide. The N-palmitoyl cysteine moiety is linked to residue cysteine 20. A lipid anchor (S-diacylglycerol cysteine) is attached at cysteine 20.

The protein belongs to the LpqB lipoprotein family.

It is found in the cell membrane. The chain is Lipoprotein LpqB from Mycobacterium bovis (strain ATCC BAA-935 / AF2122/97).